Consider the following 120-residue polypeptide: Large ribosomal subunit protein uL18 (120 aa).

The protein belongs to the universal ribosomal protein uL18 family. As to quaternary structure, part of the 50S ribosomal subunit; part of the 5S rRNA/L5/L18/L25 subcomplex. Contacts the 5S and 23S rRNAs.

Its function is as follows. This is one of the proteins that bind and probably mediate the attachment of the 5S RNA into the large ribosomal subunit, where it forms part of the central protuberance. The polypeptide is Large ribosomal subunit protein uL18 (Rhodopseudomonas palustris (strain HaA2)).